The chain runs to 377 residues: UPF0754 membrane protein GTNG_0550 (377 aa).

A run of 2 helical transmembrane segments spans residues 7–27 (LLFM…IAIV) and 357–377 (YLGA…GLWL).

Belongs to the UPF0754 family.

The protein localises to the cell membrane. In Geobacillus thermodenitrificans (strain NG80-2), this protein is UPF0754 membrane protein GTNG_0550.